The following is a 433-amino-acid chain: Glutamyl-tRNA reductase (433 aa).

Residues 49–52 (TCNR), serine 109, 114–116 (EGQ), and glutamine 120 contribute to the substrate site. Catalysis depends on cysteine 50, which acts as the Nucleophile. 198–203 (GAGRMS) contacts NADP(+).

This sequence belongs to the glutamyl-tRNA reductase family. In terms of assembly, homodimer.

It carries out the reaction (S)-4-amino-5-oxopentanoate + tRNA(Glu) + NADP(+) = L-glutamyl-tRNA(Glu) + NADPH + H(+). It participates in porphyrin-containing compound metabolism; protoporphyrin-IX biosynthesis; 5-aminolevulinate from L-glutamyl-tRNA(Glu): step 1/2. Its pathway is porphyrin-containing compound metabolism; chlorophyll biosynthesis. Its function is as follows. Catalyzes the NADPH-dependent reduction of glutamyl-tRNA(Glu) to glutamate 1-semialdehyde (GSA). This is Glutamyl-tRNA reductase from Prochlorococcus marinus subsp. pastoris (strain CCMP1986 / NIES-2087 / MED4).